The chain runs to 1316 residues: DNA-directed RNA polymerase subunit beta' (1316 aa).

Positions 60, 62, 75, and 78 each coordinate Zn(2+). Mg(2+)-binding residues include Asp-535, Asp-537, and Asp-539. 4 residues coordinate Zn(2+): Cys-891, Cys-968, Cys-975, and Cys-978.

This sequence belongs to the RNA polymerase beta' chain family. As to quaternary structure, the RNAP catalytic core consists of 2 alpha, 1 beta, 1 beta' and 1 omega subunit. When a sigma factor is associated with the core the holoenzyme is formed, which can initiate transcription. The cofactor is Mg(2+). It depends on Zn(2+) as a cofactor.

The catalysed reaction is RNA(n) + a ribonucleoside 5'-triphosphate = RNA(n+1) + diphosphate. In terms of biological role, DNA-dependent RNA polymerase catalyzes the transcription of DNA into RNA using the four ribonucleoside triphosphates as substrates. In Mycobacterium bovis (strain BCG / Pasteur 1173P2), this protein is DNA-directed RNA polymerase subunit beta'.